The sequence spans 515 residues: 2,3-bisphosphoglycerate-independent phosphoglycerate mutase (515 aa).

D14 and S63 together coordinate Mn(2+). S63 is an active-site residue. Substrate contacts are provided by residues H124, 154–155 (RD), R186, R192, 259–262 (RADR), and K334. Mn(2+)-binding residues include D401, H405, D442, H443, and H460.

The protein belongs to the BPG-independent phosphoglycerate mutase family. Mg(2+) is required as a cofactor. It depends on Mn(2+) as a cofactor.

It catalyses the reaction (2R)-2-phosphoglycerate = (2R)-3-phosphoglycerate. Its pathway is carbohydrate degradation; glycolysis; pyruvate from D-glyceraldehyde 3-phosphate: step 3/5. With respect to regulation, activity is not affected by 2,3-bisphosphoglycerate. Functionally, catalyzes the interconversion of 2-phosphoglycerate and 3-phosphoglycerate. The sequence is that of 2,3-bisphosphoglycerate-independent phosphoglycerate mutase from Brugia malayi (Filarial nematode worm).